The sequence spans 1175 residues: uncharacterized protein (1175 aa).

586 to 593 (GPAGTGKT) lines the ATP pocket.

This is an uncharacterized protein from Methanocaldococcus jannaschii (strain ATCC 43067 / DSM 2661 / JAL-1 / JCM 10045 / NBRC 100440) (Methanococcus jannaschii).